The chain runs to 185 residues: F-box protein At1g61340 (185 aa).

The 49-residue stretch at 78-126 (SRELEDLPLDILVRIICGVEHEDLKQLFHVSKTIREATMIAKQSHFAYS) folds into the F-box domain.

This chain is F-box protein At1g61340, found in Arabidopsis thaliana (Mouse-ear cress).